A 280-amino-acid chain; its full sequence is ATP synthase gamma chain (280 aa).

This sequence belongs to the ATPase gamma chain family. As to quaternary structure, F-type ATPases have 2 components, CF(1) - the catalytic core - and CF(0) - the membrane proton channel. CF(1) has five subunits: alpha(3), beta(3), gamma(1), delta(1), epsilon(1). CF(0) has three main subunits: a, b and c.

It localises to the cell membrane. Produces ATP from ADP in the presence of a proton gradient across the membrane. The gamma chain is believed to be important in regulating ATPase activity and the flow of protons through the CF(0) complex. The sequence is that of ATP synthase gamma chain from Mycoplasma mycoides subsp. mycoides SC (strain CCUG 32753 / NCTC 10114 / PG1).